The sequence spans 415 residues: Serine hydroxymethyltransferase (415 aa).

(6S)-5,6,7,8-tetrahydrofolate-binding positions include L117 and 121 to 123; that span reads GHL. N6-(pyridoxal phosphate)lysine is present on K226. A (6S)-5,6,7,8-tetrahydrofolate-binding site is contributed by E241.

The protein belongs to the SHMT family. As to quaternary structure, homodimer. The cofactor is pyridoxal 5'-phosphate.

It is found in the cytoplasm. It carries out the reaction (6R)-5,10-methylene-5,6,7,8-tetrahydrofolate + glycine + H2O = (6S)-5,6,7,8-tetrahydrofolate + L-serine. Its pathway is one-carbon metabolism; tetrahydrofolate interconversion. It participates in amino-acid biosynthesis; glycine biosynthesis; glycine from L-serine: step 1/1. Functionally, catalyzes the reversible interconversion of serine and glycine with tetrahydrofolate (THF) serving as the one-carbon carrier. This reaction serves as the major source of one-carbon groups required for the biosynthesis of purines, thymidylate, methionine, and other important biomolecules. Also exhibits THF-independent aldolase activity toward beta-hydroxyamino acids, producing glycine and aldehydes, via a retro-aldol mechanism. This chain is Serine hydroxymethyltransferase, found in Bacillus subtilis (strain 168).